We begin with the raw amino-acid sequence, 314 residues long: MTMIGPIIIAVLIIIFLIVFFTLVPVGLWISALSARVPVGLGTLIGMRLRRVVPSRVVKPLIKAVKAGLDLEVNQLESHYLAGGDVDNTVDALIAAHRANIELDFSRAAAIDLAGRDVLEAVQTSVTPKVIRTPEFTGVAQNGVEVKVITQITVQSNIERIVGGAGEDTVIARVGEAVVSTVGETREHTDVLENPNSISKKVQEQGLGDGTAYTILSIDIAEMRIGDNIKAKLDIEKANADMEVAQAAASKRKAEAIALEQENRAAVVAAEAEVPRALSRALEEGNLGVMDYYKMENVQSDTAMRESIAHEDEK.

A helical membrane pass occupies residues 4-24; that stretch reads IGPIIIAVLIIIFLIVFFTLV.

This sequence belongs to the flotillin-like FloA family. In terms of assembly, homooligomerizes.

It is found in the cell membrane. Its subcellular location is the membrane raft. In terms of biological role, found in functional membrane microdomains (FMM) that may be equivalent to eukaryotic membrane rafts. FMMs are highly dynamic and increase in number as cells age. Flotillins are thought to be important factors in membrane fluidity. The protein is Flotillin-like protein FloA of Listeria innocua serovar 6a (strain ATCC BAA-680 / CLIP 11262).